Reading from the N-terminus, the 409-residue chain is MKQNYTKLKPNFENIFFEQENDKMILNFGPQHPSAHGQLRLILELENEKIIKATPDIGYLHRGIEKMAENMIYNEFMPTTDRLDYIAATSNNYAFALGVEKLIGVDIPLRAQVIRTMLLEINRIISHIFLLGVQGMDVGALSIFLYCFIEREYGLDLMEDYCGARLTHNAIRIGGVPLDLPHNFLESVEKFTHSVPKTLDLVRGLLDKNRIWRIRLENVGYISQDFAKQWSLSGIMARGSGIKWDIRKHNPYELYSELDFEVPIATEGDCYARYQLYIEEIYESLKIIKQLIAMYPSTPKEIMAKDARYISAPKEDIMTQNYSLMQHFVLVTQGMRPPVGEVYVPTESPKGELGFFINSQGAPSPHRLKIRTPSFYHIGVLQELLIGHYFADIPAILASTNVVFGEIDR.

It belongs to the complex I 49 kDa subunit family. NDH-1 is composed of 14 different subunits. Subunits NuoB, C, D, E, F, and G constitute the peripheral sector of the complex.

It is found in the cell inner membrane. It catalyses the reaction a quinone + NADH + 5 H(+)(in) = a quinol + NAD(+) + 4 H(+)(out). NDH-1 shuttles electrons from NADH, via FMN and iron-sulfur (Fe-S) centers, to quinones in the respiratory chain. The immediate electron acceptor for the enzyme in this species is believed to be ubiquinone. Couples the redox reaction to proton translocation (for every two electrons transferred, four hydrogen ions are translocated across the cytoplasmic membrane), and thus conserves the redox energy in a proton gradient. This Helicobacter hepaticus (strain ATCC 51449 / 3B1) protein is NADH-quinone oxidoreductase subunit D.